We begin with the raw amino-acid sequence, 692 residues long: MSVVNESRKRRRLIHSEKETRRLDLGEEDDLELFQKEAAWRRSREYEHLTVLEKKLYEYWESLVLKLDHYVAAALENHEQSFEELEKITASLYQPDDNLQTLDLSLAEFSLIKDAQNYLNKYASYFQAHEPTLQKLAKFGSFKLKETPNVHEWIDQRQVHFTSMINYRTSQLKLALLKRKLSFFREALNSAELEWKRVQQDQLTSASERSIENIADDIPASEPKAILENGEGCLNDNDNISKLKNNFQSQADLMQANINSKLDELSQKSTRAAQLYVDIMGITDERVSREPHYLELKGVLSSNEEKIESINRDLSSLFEDIQFFISQRTKRQKDIIDLKLACVKEKQQLIKTLESSLTQIRNERDSLVAKQQMQYTNNLFFDDMMLLLSNLSNARVAILEGYSNRLCIWDRIERSKTGEMNNVLDEKEEISASSALEKLIKNNSCLEAELPSMYAAFDQSQSRLLKKYEELETKEKKALEMHYEKARATQKYFAAMKARDILMTEKKTLKLAENKEHDYIGKLQEREHALTKYESSLKAELEVYKQIKEIYGKHSVEVLTEDKHLQVKQTKLTQKLEDLIESVQKSGEKLMIMHQKLFHLQEEHTILSIKASYNKKESHLINQAYETQEAQVYKGMLKCSVCNFSNWKSKLIPNCGHAFCSNCMEPFYEHKTSTCPQCETPFSVSDILTIHL.

Positions 302 to 370 (SNEEKIESIN…RNERDSLVAK (69 aa)) form a coiled coil. The RING-type zinc-finger motif lies at 639 to 679 (CSVCNFSNWKSKLIPNCGHAFCSNCMEPFYEHKTSTCPQCE).

The protein belongs to the BRE1 family. As to quaternary structure, component of the histone H2B ubiquitin ligase complex (HULC) composed of at least brl1, brl2, rhp6 and shf1.

Its subcellular location is the nucleus. It carries out the reaction S-ubiquitinyl-[E2 ubiquitin-conjugating enzyme]-L-cysteine + [acceptor protein]-L-lysine = [E2 ubiquitin-conjugating enzyme]-L-cysteine + N(6)-ubiquitinyl-[acceptor protein]-L-lysine.. Its pathway is protein modification; protein ubiquitination. Functionally, E3 ubiquitin-protein ligase which belongs to the histone H2B ubiquitin ligase complex (HULC) which mediates monoubiquitination of histone H2B to form H2BK123ub1. H2BK123ub1 gives a specific tag for epigenetic transcriptional activation and is also a prerequisite for H3K4me and H3K79me formation. This chain is E3 ubiquitin-protein ligase brl1 (brl1), found in Schizosaccharomyces pombe (strain 972 / ATCC 24843) (Fission yeast).